A 174-amino-acid polypeptide reads, in one-letter code: Crossover junction endodeoxyribonuclease RuvC (174 aa).

Residues Asp8, Glu67, and Asp139 contribute to the active site. The Mg(2+) site is built by Asp8, Glu67, and Asp139.

The protein belongs to the RuvC family. As to quaternary structure, homodimer which binds Holliday junction (HJ) DNA. The HJ becomes 2-fold symmetrical on binding to RuvC with unstacked arms; it has a different conformation from HJ DNA in complex with RuvA. In the full resolvosome a probable DNA-RuvA(4)-RuvB(12)-RuvC(2) complex forms which resolves the HJ. The cofactor is Mg(2+).

It is found in the cytoplasm. It carries out the reaction Endonucleolytic cleavage at a junction such as a reciprocal single-stranded crossover between two homologous DNA duplexes (Holliday junction).. Its function is as follows. The RuvA-RuvB-RuvC complex processes Holliday junction (HJ) DNA during genetic recombination and DNA repair. Endonuclease that resolves HJ intermediates. Cleaves cruciform DNA by making single-stranded nicks across the HJ at symmetrical positions within the homologous arms, yielding a 5'-phosphate and a 3'-hydroxyl group; requires a central core of homology in the junction. The consensus cleavage sequence is 5'-(A/T)TT(C/G)-3'. Cleavage occurs on the 3'-side of the TT dinucleotide at the point of strand exchange. HJ branch migration catalyzed by RuvA-RuvB allows RuvC to scan DNA until it finds its consensus sequence, where it cleaves and resolves the cruciform DNA. In Pseudomonas putida (strain ATCC 700007 / DSM 6899 / JCM 31910 / BCRC 17059 / LMG 24140 / F1), this protein is Crossover junction endodeoxyribonuclease RuvC.